The following is an 836-amino-acid chain: Protein-glutamine gamma-glutamyltransferase K (836 aa).

Positions 1-33 are enriched in basic and acidic residues; the sequence is MDGPRSDMGRSDVSRSDMSRSDMGRSDMGRSDV. 2 disordered regions span residues 1–68 and 89–125; these read MDGP…SRGG and DDWGREPSDSRDRGSSSRGGRPDSRGGGVNAAGDGTI. Position 46 is a phosphothreonine (T46). Residues S48, S98, and S112 each carry the phosphoserine modification. Residues 89-112 are compositionally biased toward basic and acidic residues; the sequence is DDWGREPSDSRDRGSSSRGGRPDS. Residues C397, H456, and D479 contribute to the active site. The Ca(2+) site is built by N519, D521, E568, and E573. S824 carries the post-translational modification Phosphoserine.

It belongs to the transglutaminase superfamily. Transglutaminase family. Interacts with PLAAT4. It depends on Ca(2+) as a cofactor. Palmitoylated. In terms of processing, the membrane anchorage region possesses a cluster of five cysteines within which fatty acid(s) may become thioester-linked. It is subject to phorbol ester-stimulated phosphorylation and is hypersensitive to proteolysis, which releases the enzyme in a soluble form. Post-translationally, tyrosine-phosphorylated.

It localises to the membrane. It catalyses the reaction L-glutaminyl-[protein] + L-lysyl-[protein] = [protein]-L-lysyl-N(6)-5-L-glutamyl-[protein] + NH4(+). With respect to regulation, inhibited by retinoic acid, but phorbol ester treatment activates it. Catalyzes the cross-linking of proteins and the conjugation of polyamines to proteins. Responsible for cross-linking epidermal proteins during formation of the stratum corneum. Involved in cell proliferation. The polypeptide is Protein-glutamine gamma-glutamyltransferase K (TGM1) (Oryctolagus cuniculus (Rabbit)).